The sequence spans 83 residues: Hainantoxin-III 12 (83 aa).

The first 21 residues, 1 to 21 (MKASMFLALAGLVLLFVVGYA), serve as a signal peptide directing secretion. The propeptide occupies 22–48 (SGSEEKEFPRELLSKIFAVDDFKGEER). 3 disulfide bridges follow: Cys50–Cys65, Cys57–Cys70, and Cys64–Cys77. Leu81 carries the post-translational modification Leucine amide.

It belongs to the neurotoxin 10 (Hwtx-1) family. 15 (Hntx-3) subfamily. As to quaternary structure, monomer. Expressed by the venom gland.

Its subcellular location is the secreted. Its function is as follows. Selective antagonist of neuronal tetrodotoxin (TTX)-sensitive voltage-gated sodium channels (IC(50)=1270 nM on Nav1.1/SCN1A, 270 nM on Nav1.2/SCN2A, 491 nM on Nav1.3/SCN3A and 232 nM on Nav1.7/SCN9A). This toxin suppress Nav1.7 current amplitude without significantly altering the activation, inactivation, and repriming kinetics. Short extreme depolarizations partially activate the toxin-bound channel, indicating voltage-dependent inhibition of this toxin. This toxin increases the deactivation of the Nav1.7 current after extreme depolarizations. The toxin-Nav1.7 complex is gradually dissociated upon prolonged strong depolarizations in a voltage-dependent manner, and the unbound toxin rebinds to Nav1.7 after a long repolarization. Moreover, analysis of chimeric channels showed that the DIIS3-S4 linker is critical for toxin binding to Nav1.7. These data are consistent with this toxin interacting with Nav1.7 site 4 and trapping the domain II voltage sensor in the closed state. This is Hainantoxin-III 12 from Cyriopagopus hainanus (Chinese bird spider).